We begin with the raw amino-acid sequence, 580 residues long: Cis-3-hydroxy-L-proline dehydratase (580 aa).

Catalysis depends on S66, which acts as the Proton acceptor.

It belongs to the AcnX family. In terms of assembly, monomer. The cofactor is Fe(3+).

It catalyses the reaction cis-3-hydroxy-L-proline = 1-pyrroline-2-carboxylate + H2O. Its activity is regulated as follows. Inhibited by Zn(2+), Cd(2+) and Hg(2+), but not by Co(2+), Ni(2+), Mn(2+), Sr(2+), Mg(2+), or Fe(3+). Inhibited by pyrrole-2-carboxylate and its derivative 2-thiophenecarboxylate, but not by trans-aconitate, fluorocitrate and oxalomalate, which are typical inhibitors of the aconitase enzymes. Catalyzes the dehydration of cis-3-hydroxy-L-proline (c3LHyp) to Delta(1)-pyrroline-2-carboxylate (Pyr2C). Also has activity with (2S,3S,4R)-3,4-dihydroxyproline as substrate, albeit at about 300-fold lower rate. No activity with L-proline, trans-4-hydroxy-L-proline (t4LHyp), cis-4-hydroxy-L-proline (c4LHyp), trans-3-hydroxy-L-proline (t3LHyp), D-proline, cis-4-hydroxy-D-proline (c4DHyp), trans-4-hydroxy-D-proline (t4DHyp) or L-serine as substrates. No hydro-lyase activity with citrate or cis-acotinate. Does not catalyze 2-epimerization of c3LHyp to trans-3-hydroxy-D-proline (t3DHyp). Involved in a degradation pathway that converts c3LHyp to L-proline, which would allow P.aeruginosa to grow on c3LHyp as a sole carbon source. In Pseudomonas aeruginosa (strain ATCC 15692 / DSM 22644 / CIP 104116 / JCM 14847 / LMG 12228 / 1C / PRS 101 / PAO1), this protein is Cis-3-hydroxy-L-proline dehydratase.